The sequence spans 313 residues: Homoserine O-succinyltransferase (313 aa).

Cys-142 serves as the catalytic Acyl-thioester intermediate. 2 residues coordinate substrate: Lys-163 and Ser-192. The active-site Proton acceptor is the His-235. Glu-237 is an active-site residue. Residue Arg-249 coordinates substrate.

Belongs to the MetA family.

It localises to the cytoplasm. It catalyses the reaction L-homoserine + succinyl-CoA = O-succinyl-L-homoserine + CoA. It functions in the pathway amino-acid biosynthesis; L-methionine biosynthesis via de novo pathway; O-succinyl-L-homoserine from L-homoserine: step 1/1. Its function is as follows. Transfers a succinyl group from succinyl-CoA to L-homoserine, forming succinyl-L-homoserine. The sequence is that of Homoserine O-succinyltransferase from Shewanella sp. (strain ANA-3).